A 399-amino-acid polypeptide reads, in one-letter code: MAEAMDLGKDPNGPTHSSTLFVRDDGSSMSFYVRPSPAKRRLSTLILHGGGTVCRVQEPGAVLLAQPGEALAEASGDFISTQYILDCVERNERLELEAYRLGPASAADTGSEAKPGALAEGAAEPEPQRHAGRIAFTDADDVAILTYVKENARSPSSVTGNALWKAMEKSSLTQHSWQSLKDRYLKHLRGQEHKYLLGDAPVSPSSQKLKRKAEEDPEAADSGEPQNKRTPDLPEEEYVKEEIQENEEAVKKMLVEATREFEEVVVDESPPDFEIHITMCDDDPPTPEEDSETQPDEEEEEEEEKVSQPEVGAAIKIIRQLMEKFNLDLSTVTQAFLKNSGELEATSAFLASGQRADGYPIWSRQDDIDLQKDDEDTREALVKKFGAQNVARRIEFRKK.

Position 2 is an N-acetylalanine (A2). Phosphoserine is present on residues S36 and S43. Residues 78–101 (FISTQYILDCVERNERLELEAYRL) enclose the BRCT domain. A disordered region spans residues 104–132 (ASAADTGSEAKPGALAEGAAEPEPQRHAG). Over residues 112 to 125 (EAKPGALAEGAAEP) the composition is skewed to low complexity. A Glycyl lysine isopeptide (Lys-Gly) (interchain with G-Cter in SUMO2) cross-link involves residue K114. A Myb-like domain is found at 128-188 (QRHAGRIAFT…SLKDRYLKHL (61 aa)). S154 and S156 each carry phosphoserine. A Glycyl lysine isopeptide (Lys-Gly) (interchain with G-Cter in SUMO2) cross-link involves residue K194. Disordered stretches follow at residues 196–244 (LLGD…EEIQ) and 264–311 (VVVD…QPEV). S203 and S206 each carry phosphoserine. Residues K208, K212, and K240 each participate in a glycyl lysine isopeptide (Lys-Gly) (interchain with G-Cter in SUMO2) cross-link. The span at 280-304 (CDDDPPTPEEDSETQPDEEEEEEEE) shows a compositional bias: acidic residues. Residue K372 forms a Glycyl lysine isopeptide (Lys-Gly) (interchain with G-Cter in SUMO2) linkage. Positions 383–399 (KKFGAQNVARRIEFRKK) match the Nuclear localization signal motif.

Belongs to the RAP1 family. As to quaternary structure, associates with the I-kappa-B-kinase (IKK) core complex, composed of CHUK, IKBKB and IKBKG. Homodimer. Component of the shelterin complex (telosome) composed of TERF1, TERF2, TINF2, TERF2IP ACD and POT1. Interacts with TERF2; the interaction is direct. Does not interact with TERF1. Interacts with SLX4/BTBD12. In terms of tissue distribution, ubiquitous. Highly expressed.

Its subcellular location is the nucleus. It is found in the cytoplasm. It localises to the chromosome. The protein localises to the telomere. Its function is as follows. Acts both as a regulator of telomere function and as a transcription regulator. Involved in the regulation of telomere length and protection as a component of the shelterin complex (telosome). In contrast to other components of the shelterin complex, it is dispensible for telomere capping and does not participate in the protection of telomeres against non-homologous end-joining (NHEJ)-mediated repair. Instead, it is required to negatively regulate telomere recombination and is essential for repressing homology-directed repair (HDR), which can affect telomere length. Does not bind DNA directly: recruited to telomeric double-stranded 5'-TTAGGG-3' repeats via its interaction with TERF2. Independently of its function in telomeres, also acts as a transcription regulator: recruited to extratelomeric 5'-TTAGGG-3' sites via its association with TERF2 or other factors, and regulates gene expression. When cytoplasmic, associates with the I-kappa-B-kinase (IKK) complex and acts as a regulator of the NF-kappa-B signaling by promoting IKK-mediated phosphorylation of RELA/p65, leading to activate expression of NF-kappa-B target genes. The polypeptide is Telomeric repeat-binding factor 2-interacting protein 1 (TERF2IP) (Homo sapiens (Human)).